The sequence spans 310 residues: Lipoyl synthase (310 aa).

The [4Fe-4S] cluster site is built by Cys-61, Cys-66, Cys-72, Cys-87, Cys-91, Cys-94, and Ser-300. In terms of domain architecture, Radical SAM core spans 73–289 (FNNGTATFMI…EYIALSLGFS (217 aa)).

This sequence belongs to the radical SAM superfamily. Lipoyl synthase family. Requires [4Fe-4S] cluster as cofactor.

The protein resides in the cytoplasm. It catalyses the reaction [[Fe-S] cluster scaffold protein carrying a second [4Fe-4S](2+) cluster] + N(6)-octanoyl-L-lysyl-[protein] + 2 oxidized [2Fe-2S]-[ferredoxin] + 2 S-adenosyl-L-methionine + 4 H(+) = [[Fe-S] cluster scaffold protein] + N(6)-[(R)-dihydrolipoyl]-L-lysyl-[protein] + 4 Fe(3+) + 2 hydrogen sulfide + 2 5'-deoxyadenosine + 2 L-methionine + 2 reduced [2Fe-2S]-[ferredoxin]. Its pathway is protein modification; protein lipoylation via endogenous pathway; protein N(6)-(lipoyl)lysine from octanoyl-[acyl-carrier-protein]: step 2/2. In terms of biological role, catalyzes the radical-mediated insertion of two sulfur atoms into the C-6 and C-8 positions of the octanoyl moiety bound to the lipoyl domains of lipoate-dependent enzymes, thereby converting the octanoylated domains into lipoylated derivatives. The protein is Lipoyl synthase of Buchnera aphidicola subsp. Cinara cedri (strain Cc).